The primary structure comprises 331 residues: Oxygen-evolving enhancer protein 1-2, chloroplastic (331 aa).

The N-terminal 57 residues, 1 to 57 (MATSLQAAATFLQPAKIAASPSRNVHLRSNQTVGKSFGLDSSQARLTCSLHSDLKDF), are a transit peptide targeting the chloroplast. The N-terminal 27 residues, 58-84 (AGKCSDAAKIAGFALATSALVVSGAGA), are a transit peptide targeting the thylakoid.

Belongs to the PsbO family.

It is found in the plastid. The protein localises to the chloroplast thylakoid membrane. Its function is as follows. Stabilizes the manganese cluster which is the primary site of water splitting. Regulates dephosphorylation and turnover of the PSII reaction center D1 protein. This Arabidopsis thaliana (Mouse-ear cress) protein is Oxygen-evolving enhancer protein 1-2, chloroplastic (PSBO2).